A 487-amino-acid chain; its full sequence is Adenylosuccinate synthetase, chloroplastic (487 aa).

Residues 1–46 constitute a chloroplast transit peptide; the sequence is MSLSTVNHAAAAAAAAGSGKSFSAAAPAAPSVRLPRTRAPAAAAVS. GTP is bound by residues 74-80 and 102-104; these read GDEGKGK and GHT. The active-site Proton acceptor is Asp75. Asp75 and Gly102 together coordinate Mg(2+). IMP is bound by residues 75 to 78, 100 to 103, Thr192, Arg206, Gln286, Thr301, and Arg365; these read DEGK and NAGH. His103 (proton donor) is an active-site residue. 361 to 367 is a substrate binding site; the sequence is TTTGRPR. GTP-binding positions include Arg367, 393–395, and 476–478; these read KLD and GVG.

The protein belongs to the adenylosuccinate synthetase family. Homodimer. The cofactor is Mg(2+).

The protein localises to the plastid. Its subcellular location is the chloroplast. The enzyme catalyses IMP + L-aspartate + GTP = N(6)-(1,2-dicarboxyethyl)-AMP + GDP + phosphate + 2 H(+). Its pathway is purine metabolism; AMP biosynthesis via de novo pathway; AMP from IMP: step 1/2. Its function is as follows. Plays an important role in the de novo pathway and in the salvage pathway of purine nucleotide biosynthesis. Catalyzes the first committed step in the biosynthesis of AMP from IMP. The polypeptide is Adenylosuccinate synthetase, chloroplastic (Oryza sativa subsp. indica (Rice)).